The sequence spans 568 residues: Fumarate hydratase 2 (568 aa).

Residue Cys133 participates in [4Fe-4S] cluster binding. (S)-malate contacts are provided by residues 134-135 (QD), Arg173, Gly216, and 219-225 (NKAYLYQ). 2 residues coordinate [4Fe-4S] cluster: Cys252 and Cys346. (S)-malate-binding positions include Arg421, 467 to 471 (TTAGR), and Lys491.

The protein belongs to the class-I fumarase family. In terms of assembly, homodimer. The cofactor is [4Fe-4S] cluster.

The protein localises to the cytoplasm. It localises to the cytosol. It catalyses the reaction (S)-malate = fumarate + H2O. Its activity is regulated as follows. Specifically and competitively inhibited by 2-thiomalate, which coordinates with the catalytic [4Fe-4S] cluster. Weakly inhibited by malonate. Its function is as follows. Cytosolic fumarate hydratase that catalyzes the reversible hydration of fumarate to (S)-malate. The protein is Fumarate hydratase 2 of Leishmania major.